The following is a 542-amino-acid chain: Coiled-coil domain-containing protein 60 (542 aa).

A coiled-coil region spans residues 70–97; sequence TMLQEETAFKKHQQHLKKLQEEELNKFQ. Disordered stretches follow at residues 228-284 and 334-358; these read ATRK…EEEV and QTTHKSSERSSTTSGESHIQVTQKK. Low complexity-rich tracts occupy residues 245 to 261 and 342 to 351; these read SGGSSPQSSMMSVNPSS and RSSTTSGESH.

The polypeptide is Coiled-coil domain-containing protein 60 (Ccdc60) (Rattus norvegicus (Rat)).